Reading from the N-terminus, the 394-residue chain is Protein maelstrom (394 aa).

A DNA-binding region (HMG box) is located at residues 2–69; that stretch reads APKKQNGFMM…ARRDKRGSLN (68 aa). Residues 44 to 93 form a disordered region; that stretch reads TQQRGPYNSDAKDANAARRDKRGSLNGHGQVDKAQREAAESLMDKAQREA. A compositionally biased stretch (basic and acidic residues) spans 73-93; it reads QVDKAQREAAESLMDKAQREA.

It belongs to the maelstrom family.

It localises to the cytoplasm. Its subcellular location is the nucleus. Functionally, involved both in the piRNA and miRNA metabolic processes. As a component of the meiotic nuage, plays a central role during oogenesis by repressing transposable elements and preventing their mobilization, which is essential for the germline integrity. Repression of transposable elements is mediated via the piRNA metabolic process, which mediates the repression of transposable elements during meiosis by forming complexes composed of piRNAs and Piwi proteins and governs the repression of transposons. As a nuclear component, it is required for proper differentiation in the germline stem cell (GSC) lineage by repressing microRNA-7 (miR-7), thereby acting as an indirect regulator of bag-of-marbles (Bam). Acts by binding to the promoter of miR-7 gene and repressing its expression; miR-7 repression alleviates the Bam repression by miR-7, thereby allowing differentiation in the germline stem cell (GSC) lineage. The polypeptide is Protein maelstrom (mael) (Drosophila simulans (Fruit fly)).